We begin with the raw amino-acid sequence, 446 residues long: Glutamate--tRNA ligase (446 aa).

Positions 9-19 (PSPTGLLHVGN) match the 'HIGH' region motif. The short motif at 240 to 244 (GLSKR) is the 'KMSKS' region element. Lys243 contributes to the ATP binding site.

This sequence belongs to the class-I aminoacyl-tRNA synthetase family. Glutamate--tRNA ligase type 1 subfamily. Monomer.

The protein localises to the cytoplasm. The enzyme catalyses tRNA(Glu) + L-glutamate + ATP = L-glutamyl-tRNA(Glu) + AMP + diphosphate. Functionally, catalyzes the attachment of glutamate to tRNA(Glu) in a two-step reaction: glutamate is first activated by ATP to form Glu-AMP and then transferred to the acceptor end of tRNA(Glu). This Azospirillum brasilense protein is Glutamate--tRNA ligase.